Reading from the N-terminus, the 137-residue chain is ATP synthase epsilon chain (137 aa).

The protein belongs to the ATPase epsilon chain family. As to quaternary structure, F-type ATPases have 2 components, CF(1) - the catalytic core - and CF(0) - the membrane proton channel. CF(1) has five subunits: alpha(3), beta(3), gamma(1), delta(1), epsilon(1). CF(0) has three main subunits: a, b and c.

The protein resides in the cell membrane. Functionally, produces ATP from ADP in the presence of a proton gradient across the membrane. This is ATP synthase epsilon chain from Streptococcus agalactiae serotype Ia (strain ATCC 27591 / A909 / CDC SS700).